The primary structure comprises 376 residues: Arabinogalactan endo-beta-1,4-galactanase (376 aa).

An N-terminal signal peptide occupies residues 1–17 (MKKKILAATAILLAAIA). E161 acts as the Proton donor in catalysis. E270 functions as the Nucleophile in the catalytic mechanism. D281 and N285 together coordinate Ca(2+).

This sequence belongs to the glycosyl hydrolase 53 family. It depends on Ca(2+) as a cofactor.

It carries out the reaction The enzyme specifically hydrolyzes (1-&gt;4)-beta-D-galactosidic linkages in type I arabinogalactans.. The sequence is that of Arabinogalactan endo-beta-1,4-galactanase (ganB) from Cellvibrio japonicus (strain Ueda107) (Pseudomonas fluorescens subsp. cellulosa).